We begin with the raw amino-acid sequence, 71 residues long: MWSDSLVSRICVPIIVVCTSIALLNVVSFRSECSCVVHISGAAIDIRGCSFTPDFIEYAKTLRVFNHRYQE.

Topologically, residues 1 to 4 (MWSD) are lumenal. The chain crosses the membrane as a helical span at residues 5–27 (SLVSRICVPIIVVCTSIALLNVV). Residues 28 to 71 (SFRSECSCVVHISGAAIDIRGCSFTPDFIEYAKTLRVFNHRYQE) are Cytoplasmic-facing.

This sequence belongs to the Tymovirales TGBp3 protein family.

It localises to the host endoplasmic reticulum membrane. Plays a role in viral cell-to-cell propagation, by facilitating genome transport to neighboring plant cells through plasmosdesmata. May induce the formation of granular vesicles derived from the Endoplasmic reticulum, which align on actin filaments. The polypeptide is Movement protein TGBp3 (Populus balsamifera (Balsam poplar)).